The following is a 399-amino-acid chain: Elongation factor Tu 1 (399 aa).

Residues 10–209 (KPHVNIGTIG…QVDTYIPEPE (200 aa)) enclose the tr-type G domain. Residues 19–26 (GHVDHGKT) form a G1 region. 19 to 26 (GHVDHGKT) provides a ligand contact to GTP. Residue threonine 26 participates in Mg(2+) binding. The tract at residues 60-64 (GITIA) is G2. Positions 81-84 (DCPG) are G3. GTP-binding positions include 81 to 85 (DCPGH) and 136 to 139 (NKAD). The G4 stretch occupies residues 136-139 (NKAD). The G5 stretch occupies residues 174 to 176 (SAL).

This sequence belongs to the TRAFAC class translation factor GTPase superfamily. Classic translation factor GTPase family. EF-Tu/EF-1A subfamily. As to quaternary structure, monomer.

Its subcellular location is the cytoplasm. It carries out the reaction GTP + H2O = GDP + phosphate + H(+). Its function is as follows. GTP hydrolase that promotes the GTP-dependent binding of aminoacyl-tRNA to the A-site of ribosomes during protein biosynthesis. The polypeptide is Elongation factor Tu 1 (Syntrophotalea carbinolica (strain DSM 2380 / NBRC 103641 / GraBd1) (Pelobacter carbinolicus)).